We begin with the raw amino-acid sequence, 414 residues long: 3-oxoacyl-[acyl-carrier-protein] synthase 2 (414 aa).

The region spanning 4–411 is the Ketosynthase family 3 (KS3) domain; the sequence is NKRVVITGMG…GHNAVLVFKK (408 aa). Active-site for beta-ketoacyl synthase activity residues include Cys-165, His-304, and His-341.

The protein belongs to the thiolase-like superfamily. Beta-ketoacyl-ACP synthases family.

It carries out the reaction a fatty acyl-[ACP] + malonyl-[ACP] + H(+) = a 3-oxoacyl-[ACP] + holo-[ACP] + CO2. It catalyses the reaction (9Z)-hexadecenoyl-[ACP] + malonyl-[ACP] + H(+) = 3-oxo-(11Z)-octadecenoyl-[ACP] + holo-[ACP] + CO2. Its pathway is lipid metabolism; fatty acid biosynthesis. Involved in the type II fatty acid elongation cycle. Catalyzes the elongation of a wide range of acyl-ACP by the addition of two carbons from malonyl-ACP to an acyl acceptor. Can efficiently catalyze the conversion of palmitoleoyl-ACP (cis-hexadec-9-enoyl-ACP) to cis-vaccenoyl-ACP (cis-octadec-11-enoyl-ACP), an essential step in the thermal regulation of fatty acid composition. The sequence is that of 3-oxoacyl-[acyl-carrier-protein] synthase 2 (fabF) from Staphylococcus aureus (strain MW2).